Reading from the N-terminus, the 964-residue chain is Activator of stress genes 1 (964 aa).

Residues 21 to 47 constitute a DNA-binding region (zn(2)-C6 fungal-type); that stretch reads CDECRKKKVKCDGQQPCIHCTVYSYEC. The interval 104 to 125 is disordered; the sequence is ASTIPASNNPSKPRKYKTKSTR. At Ser166 the chain carries Phosphoserine; by ATM or ATR. Ser186 carries the post-translational modification Phosphoserine. 3 stretches are compositionally biased toward polar residues: residues 190 to 201, 209 to 225, and 733 to 759; these read PVLSSNSKNSTP, KSDS…DSVD, and NNTP…TNMS. 3 disordered regions span residues 190–225, 733–764, and 800–900; these read PVLS…DSVD, NNTP…ERDP, and NSAF…SPSY. Residues 800–896 are compositionally biased toward low complexity; it reads NSAFDFSSSK…NDFGIKIDNN (97 aa). The residue at position 963 (Ser963) is a Phosphoserine.

The protein belongs to the ASG1 family.

It is found in the nucleus. Functionally, probable transcription factor involved in the stress response. In Saccharomyces cerevisiae (strain ATCC 204508 / S288c) (Baker's yeast), this protein is Activator of stress genes 1 (ASG1).